The sequence spans 1058 residues: SIT4-associating protein SAP185 (1058 aa).

K20 participates in a covalent cross-link: Glycyl lysine isopeptide (Lys-Gly) (interchain with G-Cter in ubiquitin). 6 disordered regions span residues 34 to 71 (TSTEAGKIDSNSTDESLESNSFKSEDEEEEYELPNREE), 135 to 202 (SEDR…ELEE), 513 to 556 (NSQN…TSID), 818 to 862 (CQEE…DQEQ), 873 to 892 (TKTRLNFNPDSDATEQVPGE), and 934 to 992 (ELSD…HDYD). Residues 42-55 (DSNSTDESLESNSF) show a composition bias toward polar residues. Composition is skewed to basic and acidic residues over residues 135 to 146 (SEDRDLVRGEDK) and 153 to 175 (ENAKADKKNIDGTFEEKERTRSG). Acidic residues predominate over residues 176 to 189 (EEEELENEENDSAS). Residues 190–202 (EDTRVTLPHELEE) are compositionally biased toward basic and acidic residues. Acidic residues-rich tracts occupy residues 528–546 (ENEDDNTGDADDEVEDDTN) and 820–837 (EEEEDEGEGYVSFDEDEP). Positions 838 to 861 (QEYRNGDSVRSKESNSSEGKRDQE) are enriched in basic and acidic residues. Over residues 934–963 (ELSDGWESSPSNSIPKRASPSKNGMNSPMF) the composition is skewed to polar residues. The span at 967-991 (FELHSPTDEFGGHKDEILSAEGHDY) shows a compositional bias: basic and acidic residues.

This sequence belongs to the SAPS family. Post-translationally, hyperphosphorylated in the absence of SIT4.

Its function is as follows. Associates with the SIT4 phosphatase in a cell cycle dependent manner. May be directly or indirectly involved in SIT4-dependent functions in budding and in normal G1 cyclin expression. The chain is SIT4-associating protein SAP185 (SAP185) from Saccharomyces cerevisiae (strain ATCC 204508 / S288c) (Baker's yeast).